The sequence spans 177 residues: Keratin-associated protein 1-1 (177 aa).

It belongs to the KRTAP type 1 family. As to quaternary structure, interacts with hair keratins. Expressed in the middle/upper portions of the hair cortex, in the region termed the keratogenous zone.

Functionally, in the hair cortex, hair keratin intermediate filaments are embedded in an interfilamentous matrix, consisting of hair keratin-associated proteins (KRTAP), which are essential for the formation of a rigid and resistant hair shaft through their extensive disulfide bond cross-linking with abundant cysteine residues of hair keratins. The matrix proteins include the high-sulfur and high-glycine-tyrosine keratins. The protein is Keratin-associated protein 1-1 (KRTAP1-1) of Homo sapiens (Human).